The chain runs to 200 residues: GTP-binding protein rho2 (200 aa).

A GTP-binding site is contributed by 15 to 22 (GDGACGKT). An Effector region motif is present at residues 37-45 (YVPTVFENY). GTP contacts are provided by residues 62 to 66 (DTAGQ) and 120 to 123 (MKAD). Cysteine methyl ester is present on cysteine 197. Cysteine 197 is lipidated: S-geranylgeranyl cysteine. Positions 198-200 (IIS) are cleaved as a propeptide — removed in mature form.

It belongs to the small GTPase superfamily. Rho family. As to quaternary structure, interacts with pck2.

It is found in the cell membrane. Functionally, involved in cell morphogenesis, the maintenance of growth direction, control of polarity and of cell wall integrity. Regulates the synthesis of alpha-D-glucan through activation of pck2. This is GTP-binding protein rho2 (rho2) from Schizosaccharomyces pombe (strain 972 / ATCC 24843) (Fission yeast).